A 364-amino-acid polypeptide reads, in one-letter code: Medium-wave-sensitive opsin 2 (364 aa).

The disordered stretch occupies residues 1–23; the sequence is MAQQWSLQRLAGRHPQDSYEDST. At 1-52 the chain is on the extracellular side; sequence MAQQWSLQRLAGRHPQDSYEDSTQSSIFTYTNSNSTRGPFEGPNYHIAPRWV. A required for 11-cis-retinal regeneration region spans residues 17 to 43; the sequence is DSYEDSTQSSIFTYTNSNSTRGPFEGP. N-linked (GlcNAc...) asparagine glycosylation occurs at Asn-34. The helical transmembrane segment at 53-77 threads the bilayer; sequence YHLTSVWMIFVVIASVFTNGLVLAA. The Cytoplasmic segment spans residues 78–89; sequence TMKFKKLRHPLN. Residues 90 to 115 traverse the membrane as a helical segment; the sequence is WILVNLAVADLAETVIASTISVVNQV. The Extracellular segment spans residues 116-129; sequence YGYFVLGHPMCVLE. Cysteines 126 and 203 form a disulfide. A helical transmembrane segment spans residues 130–149; sequence GYTVSLCGITGLWSLAIISW. Topologically, residues 150–168 are cytoplasmic; the sequence is ERWMVVCKPFGNVRFDAKL. Residues 169–192 traverse the membrane as a helical segment; the sequence is AIVGIAFSWIWAAVWTAPPIFGWS. The Extracellular portion of the chain corresponds to 193–218; that stretch reads RYWPHGLKTSCGPDVFSGSSYPGVQS. Residues 219–246 traverse the membrane as a helical segment; the sequence is YMIVLMVTCCITPLSIIVLCYLQVWLAI. Over 247-268 the chain is Cytoplasmic; sequence RAVAKQQKESESTQKAEKEVTR. Residues 269–292 form a helical membrane-spanning segment; sequence MVVVMVLAFCFCWGPYAFFACFAA. The Extracellular portion of the chain corresponds to 293–300; it reads ANPGYPFH. Residues 301 to 325 traverse the membrane as a helical segment; the sequence is PLMAALPAFFAKSATIYNPVIYVFM. Lys-312 carries the N6-(retinylidene)lysine modification. The Cytoplasmic segment spans residues 326 to 364; it reads NRQFRNCILQLFGKKVDDGSELSSASKTEVSSVSSVSPA.

It belongs to the G-protein coupled receptor 1 family. Opsin subfamily. N-glycosylated. O-glycosylated. In terms of processing, phosphorylated on some or all of the serine and threonine residues present in the C-terminal region.

It localises to the cell membrane. In terms of biological role, visual pigments are the light-absorbing molecules that mediate vision. They consist of an apoprotein, opsin, covalently linked to cis-retinal. In Homo sapiens (Human), this protein is Medium-wave-sensitive opsin 2.